Consider the following 879-residue polypeptide: Phosphoenolpyruvate carboxylase (879 aa).

Active-site residues include His-138 and Lys-546.

The protein belongs to the PEPCase type 1 family. The cofactor is Mg(2+).

It carries out the reaction oxaloacetate + phosphate = phosphoenolpyruvate + hydrogencarbonate. Functionally, forms oxaloacetate, a four-carbon dicarboxylic acid source for the tricarboxylic acid cycle. The polypeptide is Phosphoenolpyruvate carboxylase (Pectobacterium carotovorum subsp. carotovorum (strain PC1)).